We begin with the raw amino-acid sequence, 76 residues long: Alpha-amylase inhibitor Z-2685 (76 aa).

Disulfide bonds link C9-C25 and C43-C70.

Inhibits mammalian alpha-amylases specifically but has no action on plant and microbial alpha-amylases. The chain is Alpha-amylase inhibitor Z-2685 from Streptomyces rochei (Streptomyces parvullus).